The chain runs to 187 residues: Ribonuclease HII (187 aa).

The 187-residue stretch at M1–E187 folds into the RNase H type-2 domain. A divalent metal cation is bound by residues D7, E8, and D99.

Belongs to the RNase HII family. It depends on Mn(2+) as a cofactor. Mg(2+) is required as a cofactor.

Its subcellular location is the cytoplasm. The enzyme catalyses Endonucleolytic cleavage to 5'-phosphomonoester.. Functionally, endonuclease that specifically degrades the RNA of RNA-DNA hybrids. This Francisella tularensis subsp. mediasiatica (strain FSC147) protein is Ribonuclease HII.